A 238-amino-acid polypeptide reads, in one-letter code: Uridylate kinase (238 aa).

12-15 (KLSG) contacts ATP. Glycine 54 lines the UMP pocket. Residues glycine 55 and arginine 59 each contribute to the ATP site. UMP contacts are provided by residues aspartate 74 and 135–142 (TGNPFFTT). Residues threonine 162, tyrosine 168, and aspartate 171 each contribute to the ATP site.

This sequence belongs to the UMP kinase family. In terms of assembly, homohexamer.

Its subcellular location is the cytoplasm. It catalyses the reaction UMP + ATP = UDP + ADP. The protein operates within pyrimidine metabolism; CTP biosynthesis via de novo pathway; UDP from UMP (UMPK route): step 1/1. Its activity is regulated as follows. Inhibited by UTP. Its function is as follows. Catalyzes the reversible phosphorylation of UMP to UDP. The sequence is that of Uridylate kinase from Bordetella bronchiseptica (strain ATCC BAA-588 / NCTC 13252 / RB50) (Alcaligenes bronchisepticus).